A 461-amino-acid polypeptide reads, in one-letter code: tRNA modification GTPase MnmE (461 aa).

(6S)-5-formyl-5,6,7,8-tetrahydrofolate-binding residues include R23, E88, and R127. Residues 223–383 (GLNTVIVGKP…LKECIKNLFF (161 aa)) form the TrmE-type G domain. A K(+)-binding site is contributed by N233. GTP contacts are provided by residues 233–238 (NVGKSS), 252–258 (TEIPGTT), and 277–280 (DTAG). A Mg(2+)-binding site is contributed by S237. K(+) contacts are provided by T252, I254, and T257. Residue T258 participates in Mg(2+) binding. K461 lines the (6S)-5-formyl-5,6,7,8-tetrahydrofolate pocket.

The protein belongs to the TRAFAC class TrmE-Era-EngA-EngB-Septin-like GTPase superfamily. TrmE GTPase family. Homodimer. Heterotetramer of two MnmE and two MnmG subunits. It depends on K(+) as a cofactor.

Its subcellular location is the cytoplasm. Its function is as follows. Exhibits a very high intrinsic GTPase hydrolysis rate. Involved in the addition of a carboxymethylaminomethyl (cmnm) group at the wobble position (U34) of certain tRNAs, forming tRNA-cmnm(5)s(2)U34. This Clostridium botulinum (strain Loch Maree / Type A3) protein is tRNA modification GTPase MnmE.